The sequence spans 61 residues: Large ribosomal subunit protein eL37 (61 aa).

Positions 19, 22, 34, and 37 each coordinate Zn(2+). The segment at 19–37 (CRRCGRNAYNVSKHYCAAC) adopts a C4-type zinc-finger fold.

This sequence belongs to the eukaryotic ribosomal protein eL37 family. It depends on Zn(2+) as a cofactor.

Binds to the 23S rRNA. The chain is Large ribosomal subunit protein eL37 from Saccharolobus islandicus (strain Y.N.15.51 / Yellowstone #2) (Sulfolobus islandicus).